The chain runs to 228 residues: UPF0758 protein STER_1430 (228 aa).

Residues 103–225 (QIMSSQQVAR…YYSFREERED (123 aa)) enclose the MPN domain. Zn(2+) is bound by residues H174, H176, and D187. The short motif at 174–187 (HNHPSGEAYPSRND) is the JAMM motif element.

This sequence belongs to the UPF0758 family.

The polypeptide is UPF0758 protein STER_1430 (Streptococcus thermophilus (strain ATCC BAA-491 / LMD-9)).